The following is a 399-amino-acid chain: Type II secretion system protein L (399 aa).

The Cytoplasmic portion of the chain corresponds to 1–247 (MSKAENTSGK…VKPWKQALLP (247 aa)). The chain crosses the membrane as a helical span at residues 248-264 (WRNVLIALSAWLLLVLG). Over 265 to 399 (ESVWTHYQWY…EGQLTLRSQP (135 aa)) the chain is Periplasmic.

The protein belongs to the GSP L family. In terms of assembly, type II secretion system is composed of four main components: the outer membrane complex, the inner membrane complex, the cytoplasmic secretion ATPase and the periplasm-spanning pseudopilus. Forms homodimers. Interacts with OutM/GspM. Interacts with OutE/GspE and OutF/GspF.

It is found in the cell inner membrane. Inner membrane component of the type II secretion system required for the energy-dependent secretion of extracellular factors such as proteases and toxins from the periplasm. Plays a role in the complex assembly and recruits OutM resulting in a stable complex in the inner membrane. Provides thus a link between the energy-providing OutE protein in the cytoplasm and the rest of the T2SS machinery. The protein is Type II secretion system protein L (outL) of Dickeya chrysanthemi (Pectobacterium chrysanthemi).